Here is a 221-residue protein sequence, read N- to C-terminus: Serine/arginine-rich splicing factor 2 (221 aa).

N-acetylserine is present on Ser2. Ser2 is subject to Phosphoserine. The RRM domain occupies 14–92 (TSLKVDNLTY…RELRVQMARY (79 aa)). Residues Thr22 and Thr25 each carry the phosphothreonine modification. Ser26 bears the Phosphoserine mark. Residue Lys52 is modified to N6-acetyllysine. The disordered stretch occupies residues 92-221 (YGRPPDSHHS…SPEEEGAVSS (130 aa)). Basic residues-rich tracts occupy residues 117–171 (RRSR…RSKS) and 179–189 (SRSRSRSRSRS). Residues Ser189, Ser191, Ser204, Ser206, Ser208, Ser212, and Ser220 each carry the phosphoserine modification. Over residues 212 to 221 (SPEEEGAVSS) the composition is skewed to acidic residues.

The protein belongs to the splicing factor SR family. In vitro, self-associates and binds SRSF1/SFRS1 (ASF/SF2), SNRP70 and U2AF1 but not U2AF2. Binds SREK1/SFRS12. Interacts with CCNL1 and CCNL2. Interacts with SCAF11. Interacts with ZRSR2/U2AF1-RS2. Interacts with CCDC55 (via C-terminus). Interacts with BRDT. In terms of processing, extensively phosphorylated on serine residues in the RS domain. Phosphorylated by SRPK2 and this causes its redistribution from the nuclear speckle to nucleoplasm and controls cell fate decision in response to cisplatin treatment. KAT5/TIP60 inhibits its phosphorylation by preventing SRPK2 nuclear translocation. Acetylation on Lys-52 by KAT5/TIP60 promotes its proteasomal degradation. This effect is counterbalanced by HDAC6, which positively controls SRSF2 protein level by deacetylating it and preventing its proteasomal degradation.

Its subcellular location is the nucleus. It is found in the nucleoplasm. It localises to the nucleus speckle. Functionally, necessary for the splicing of pre-mRNA. It is required for formation of the earliest ATP-dependent splicing complex and interacts with spliceosomal components bound to both the 5'- and 3'-splice sites during spliceosome assembly. It also is required for ATP-dependent interactions of both U1 and U2 snRNPs with pre-mRNA. Interacts with other spliceosomal components, via the RS domains, to form a bridge between the 5'- and 3'-splice site binding components, U1 snRNP and U2AF. Binds to purine-rich RNA sequences, either 5'-AGSAGAGTA-3' (S=C or G) or 5'-GTTCGAGTA-3'. Can bind to beta-globin mRNA and commit it to the splicing pathway. The phosphorylated form (by SRPK2) is required for cellular apoptosis in response to cisplatin treatment. The chain is Serine/arginine-rich splicing factor 2 (SRSF2) from Pan troglodytes (Chimpanzee).